We begin with the raw amino-acid sequence, 302 residues long: Protoheme IX farnesyltransferase (302 aa).

Helical transmembrane passes span Leu-28–Pro-48, Met-50–Met-70, Leu-93–Ala-115, Tyr-119–Leu-138, Ile-147–Gly-167, Gly-172–Gly-192, Leu-219–Gly-239, Phe-242–Phe-262, and Ala-271–Leu-291.

Belongs to the UbiA prenyltransferase family. Protoheme IX farnesyltransferase subfamily.

It is found in the cell membrane. The enzyme catalyses heme b + (2E,6E)-farnesyl diphosphate + H2O = Fe(II)-heme o + diphosphate. It participates in porphyrin-containing compound metabolism; heme O biosynthesis; heme O from protoheme: step 1/1. Converts heme B (protoheme IX) to heme O by substitution of the vinyl group on carbon 2 of heme B porphyrin ring with a hydroxyethyl farnesyl side group. The polypeptide is Protoheme IX farnesyltransferase (Aeropyrum pernix (strain ATCC 700893 / DSM 11879 / JCM 9820 / NBRC 100138 / K1)).